A 425-amino-acid polypeptide reads, in one-letter code: Formyl-CoA:oxalate CoA-transferase (425 aa).

Residues 17-18 (QS), Arg38, 72-75 (LDTK), 96-98 (NFG), Arg104, and 136-139 (KVYE) contribute to the CoA site. The active-site Nucleophile is the Asp168. Residue 247–249 (GGQ) coordinates substrate.

It belongs to the CoA-transferase III family. Frc subfamily. Homodimer.

It catalyses the reaction formyl-CoA + oxalate = oxalyl-CoA + formate. The protein operates within metabolic intermediate degradation; oxalate degradation; CO(2) and formate from oxalate: step 1/2. In terms of biological role, involved in the catabolism of oxalate and in the adapatation to low pH via the induction of the oxalate-dependent acid tolerance response (ATR). Catalyzes the transfer of the CoA moiety from formyl-CoA to oxalate. This chain is Formyl-CoA:oxalate CoA-transferase, found in Rhodopseudomonas palustris (strain BisA53).